Reading from the N-terminus, the 501-residue chain is NADH-quinone oxidoreductase subunit N (501 aa).

14 helical membrane-spanning segments follow: residues 4-24 (HLPILIVIIPLFVAMAARLLV), 34-54 (FVLAAALAVLASGAVALAETL), 80-100 (LAGGLIVLVAFFGLAALVYAG), 112-132 (GSFYALFLLAKAGLLGMCATG), 134-154 (LFNLYVFLEISSLAAYALIAF), 167-187 (LIIGTAAACFYLLGVGYLYAM), 207-227 (PVVILALVFIVAGLGIKMALF), 241-261 (PAPVLAFMAAVMTKVSAYALY), 278-298 (LQVLGWMAAAGILFGSIMAIA), 314-334 (VGYIVLGLAVGNVLALYGALL), 335-355 (HVLSHALVKGGLFFIAGGVSW), 376-396 (MGAFVAAALSMIGLPPTLGFF), 409-429 (GAWVFVAVLVVSSLLTAVYFF), and 463-483 (PASMLVPILVLGIGVVVLGLF).

It belongs to the complex I subunit 2 family. NDH-1 is composed of 14 different subunits. Subunits NuoA, H, J, K, L, M, N constitute the membrane sector of the complex.

The protein localises to the cell membrane. It catalyses the reaction a quinone + NADH + 5 H(+)(in) = a quinol + NAD(+) + 4 H(+)(out). NDH-1 shuttles electrons from NADH, via FMN and iron-sulfur (Fe-S) centers, to quinones in the respiratory chain. The immediate electron acceptor for the enzyme in this species is believed to be a menaquinone. Couples the redox reaction to proton translocation (for every two electrons transferred, four hydrogen ions are translocated across the cytoplasmic membrane), and thus conserves the redox energy in a proton gradient. The polypeptide is NADH-quinone oxidoreductase subunit N (Desulforudis audaxviator (strain MP104C)).